A 137-amino-acid polypeptide reads, in one-letter code: Large ribosomal subunit protein uL16 (137 aa).

This sequence belongs to the universal ribosomal protein uL16 family. Part of the 50S ribosomal subunit.

Its function is as follows. Binds 23S rRNA and is also seen to make contacts with the A and possibly P site tRNAs. This Chelativorans sp. (strain BNC1) protein is Large ribosomal subunit protein uL16.